Reading from the N-terminus, the 132-residue chain is Salivary cystatin-L2 (132 aa).

Positions 1-18 are cleaved as a signal peptide; it reads MTSSLALVLVFGGAAVCA. Positions 28–117 constitute a Cystatin domain; the sequence is ERSNQDDPEY…RTCTTVIYRN (90 aa). Residues 87–131 form a required for interaction with mouse ANXA2 region; the sequence is TCELTSTYNKDTCQANANAAQRTCTTVIYRNLQGEKSISSFECAA. 2 disulfides stabilise this stretch: Cys88–Cys99 and Cys110–Cys129.

Belongs to the cystatin family. In terms of assembly, monomer. Interacts (via loop 2) with mouse ANXA2; the interaction results in reduced activation of mouse NLRC4 inflammasome formation upon Anaplasma phagocytophilum infection. In terms of tissue distribution, detected in salivary gland and midgut.

It localises to the secreted. In terms of biological role, contributes to the suppression of the host's immune response to tick salivary proteins and is important for successful feeding on hosts. Inhibitor of cysteine proteinases. Inhibits host immune responses, probably via its inhibition of host cathepsins. Inhibits host papain (in vitro). Inhibits host cathepsin L (CTSL) (in vitro). Inhibits host cathepsin L2 (CTSV) (in vitro). Attenuates IFN-beta (IFNB1)-triggered JAK/STAT signaling pathway in mouse dendritic cells. Suppresses induction of interferon-stimulated gene IRF7 and production of CXCL10 in lipopolysaccharide (LPS)-activated dendritic cells. Functionally, (Microbial infection) Down-regulates TLR2-mediated host responses to infection by Borrelia burgdorferi and the production of chemokines CCL3 and CXCL10 by host dendritic cells. Enhances infection by the tick-transmitted pathogen B.burgdorferi (in vitro). Its function is as follows. (Microbial infection) Inhibits host inflammatory responses to Anaplasma phagocytophilum infection. Interacts with mouse ANXA2 and suppresses oligomerization of NLRC4, a key component of host inflammasomes that sense A.phagocytophilum infection. Indirectly targets caspase-1 (CASP1) activation and subsequent IL-1beta (IL1B) and IL18 release by inhibiting reactive oxygen species (ROS) production from NADPH oxidase complex in A.phagocytophilum-infected mouse macrophages. (Microbial infection) Promotes replication of tick-borne encephalitis virus in mouse dendritic cells and reduces anti-viral effect of host IFN-beta (IFNB1). The polypeptide is Salivary cystatin-L2 (Ixodes scapularis (Black-legged tick)).